Reading from the N-terminus, the 696-residue chain is Equisetin cluster transcription factor eqxF (696 aa).

Disordered regions lie at residues 1 to 24 (MADQ…GRAR) and 73 to 117 (NQEQ…PADY).

It is found in the nucleus. In terms of biological role, transcription factor that regulates the expression of the gene cluster that mediates the biosynthesis of Equisetin. The chain is Equisetin cluster transcription factor eqxF from Fusarium heterosporum.